Here is a 395-residue protein sequence, read N- to C-terminus: Ribose-phosphate pyrophosphokinase 2, chloroplastic (395 aa).

Residues 1–23 (MASPAPRSLSSSSSSSSSSFCPS) are compositionally biased toward low complexity. Positions 1–33 (MASPAPRSLSSSSSSSSSSFCPSISPPPRSPSR) are disordered. The transit peptide at 1-42 (MASPAPRSLSSSSSSSSSSFCPSISPPPRSPSRASLPFSVKC) directs the protein to the chloroplast. 4 residues coordinate Mg(2+): Asp209, His211, Asp220, and Asp224. Positions 295 to 310 (GKVAVMLDDMIDTAGT) are binding of phosphoribosylpyrophosphate.

The protein belongs to the ribose-phosphate pyrophosphokinase family.

It localises to the plastid. The protein localises to the chloroplast. It carries out the reaction D-ribose 5-phosphate + ATP = 5-phospho-alpha-D-ribose 1-diphosphate + AMP + H(+). This chain is Ribose-phosphate pyrophosphokinase 2, chloroplastic (PRS2), found in Spinacia oleracea (Spinach).